Reading from the N-terminus, the 237-residue chain is Large ribosomal subunit protein uL1 (237 aa).

The protein belongs to the universal ribosomal protein uL1 family. Part of the 50S ribosomal subunit.

Functionally, binds directly to 23S rRNA. The L1 stalk is quite mobile in the ribosome, and is involved in E site tRNA release. Its function is as follows. Protein L1 is also a translational repressor protein, it controls the translation of the L11 operon by binding to its mRNA. The polypeptide is Large ribosomal subunit protein uL1 (Synechococcus sp. (strain ATCC 27144 / PCC 6301 / SAUG 1402/1) (Anacystis nidulans)).